Here is a 600-residue protein sequence, read N- to C-terminus: MKKSEMKGYRTHHCNELNLALVGHKAKLCGWVHSKRDHGGLLFIDLRDREGITQVVFHPEKDPPLFAKAKQLKNEFVVKVEGKVVERPAGTKNASIPTGEIELEAESLEILNPSQPLPFNLDEDIENEELRLSFRFLDLRRKKILNCLKVRHLVSSVVREYLSREGFLEVETPILSKSTPEGARDFLVPSRLSPGKFYALPQAPQQYKQLLMVAGIDKYFQIARCFRDEDLRSDRQPEFTQIDLEASFVEVEDIMKWVEEMIQLIFLKVLGIELSLPFVRLTYSEALDNYGSDKPDLRIEWQIQDVGTVFKNTQFKLFRDVIEKGGVIKALNAKGRAPMVNSSALEELVGIATSMGAKGLAHIRVENQEWKSPIVKFFSSEERKELERLLRMEPSDLVLFSAGPREQACLILGKIRLHLAEMTQGIPGNQWKFAWITDFPLFEYSPLEQKWNSVHHPFTRPHPEDLTKLNEGKYDAIRALAYDIVLNGVELGGGSLRIYEKELQEKVFSILGIGKERQELLFGHLLKAFQYGAPPHGGIALGLDRFVMLLTGSESLREVIAFPKNRHGVDLLTQSPSEVDYQQLKELNIQLSFPSIKIEP.

Position 181 (Glu-181) interacts with L-aspartate. The segment at 205–208 is aspartate; sequence QQYK. Arg-227 contributes to the L-aspartate binding site. ATP is bound by residues 227 to 229 and Gln-236; that span reads RDE. Residue His-455 participates in L-aspartate binding. Glu-490 provides a ligand contact to ATP. L-aspartate is bound at residue Arg-497. Position 542-545 (542-545) interacts with ATP; the sequence is GLDR.

The protein belongs to the class-II aminoacyl-tRNA synthetase family. Type 1 subfamily. As to quaternary structure, homodimer.

Its subcellular location is the cytoplasm. The catalysed reaction is tRNA(Asx) + L-aspartate + ATP = L-aspartyl-tRNA(Asx) + AMP + diphosphate. Its function is as follows. Aspartyl-tRNA synthetase with relaxed tRNA specificity since it is able to aspartylate not only its cognate tRNA(Asp) but also tRNA(Asn). Reaction proceeds in two steps: L-aspartate is first activated by ATP to form Asp-AMP and then transferred to the acceptor end of tRNA(Asp/Asn). The chain is Aspartate--tRNA(Asp/Asn) ligase from Methylacidiphilum infernorum (isolate V4) (Methylokorus infernorum (strain V4)).